A 561-amino-acid chain; its full sequence is Arginine--tRNA ligase (561 aa).

Residues 128 to 138 carry the 'HIGH' region motif; sequence ANPTGPLHVGH.

This sequence belongs to the class-I aminoacyl-tRNA synthetase family. As to quaternary structure, monomer.

The protein localises to the cytoplasm. The catalysed reaction is tRNA(Arg) + L-arginine + ATP = L-arginyl-tRNA(Arg) + AMP + diphosphate. The chain is Arginine--tRNA ligase from Marinobacter nauticus (strain ATCC 700491 / DSM 11845 / VT8) (Marinobacter aquaeolei).